We begin with the raw amino-acid sequence, 77 residues long: MKAFIVILSIAIVLLLIVSIKETSAKDCKQECVKRYTNGDFTNFFKVEYGPERRGGKCYCEFTCRVKFYIHLKHEMN.

A signal peptide spans 1 to 25 (MKAFIVILSIAIVLLLIVSIKETSA). Residues 26 to 46 (KDCKQECVKRYTNGDFTNFFK) constitute a propeptide that is removed on maturation.

Belongs to the scolopendra neurotoxin 3 family. Contains 2 disulfide bonds. As to expression, expressed by the venom gland.

It is found in the secreted. The polypeptide is Putative neurotoxin 2 (Scolopendra mutilans (Chinese red-headed centipede)).